Reading from the N-terminus, the 280-residue chain is Intimin (280 aa).

Positions 1–92 (ITEIKADKTT…MLKLLEVEFF (92 aa)) constitute a Big-1 domain. The region spanning 127-173 (ANGGNGKYTWYSANPAIASVDPSSGQVTLKDKGETTITVVSGDKQTA) is the BIG2 domain. An intrachain disulfide couples Cys201 to Cys278.

Belongs to the intimin/invasin family.

It is found in the cell outer membrane. In terms of biological role, an inverse autotransporter. The polypeptide is Intimin (eaeA) (Hafnia alvei).